The following is a 285-amino-acid chain: Anamorsin homolog 1 (285 aa).

The interval 1–150 (MEATVLLVTD…QKPTWETGSS (150 aa)) is N-terminal SAM-like domain. Residues 150–195 (SFSLKKKSVQKQESLPKPGALSVKPEMNVDLEDLIDEESLLSEEDL) are linker. [2Fe-2S] cluster-binding residues include cysteine 206, cysteine 215, cysteine 218, and cysteine 220. Residues 206–220 (CEVSTKRKACKNCTC) are fe-S binding site A. [4Fe-4S] cluster-binding residues include cysteine 246, cysteine 249, cysteine 257, and cysteine 260. Short sequence motifs (cx2C motif) lie at residues 246 to 249 (CGNC) and 257 to 260 (CSSC). A fe-S binding site B region spans residues 246–260 (CGNCGLGDAFRCSSC).

This sequence belongs to the anamorsin family. In terms of assembly, monomer. Requires [2Fe-2S] cluster as cofactor. [4Fe-4S] cluster is required as a cofactor.

Its subcellular location is the cytoplasm. The protein resides in the mitochondrion intermembrane space. Functionally, component of the cytosolic iron-sulfur (Fe-S) protein assembly (CIA) machinery. Required for the maturation of extramitochondrial Fe-S proteins. Part of an electron transfer chain functioning in an early step of cytosolic Fe-S biogenesis, facilitating the de novo assembly of a [4Fe-4S] cluster on the cytosolic Fe-S scaffold complex. Electrons are transferred from NADPH via a FAD- and FMN-containing diflavin oxidoreductase. Together with the diflavin oxidoreductase, also required for the assembly of the diferric tyrosyl radical cofactor of ribonucleotide reductase (RNR), probably by providing electrons for reduction during radical cofactor maturation in the catalytic small subunit. This chain is Anamorsin homolog 1, found in Picea sitchensis (Sitka spruce).